We begin with the raw amino-acid sequence, 148 residues long: Calmodulin (148 aa).

At Ala-2 the chain carries N-acetylalanine. 4 EF-hand domains span residues 8–43 (DQIS…LGQN), 44–79 (PTEA…KMKD), 81–116 (DSEE…LGEK), and 116–148 (KLTD…MMAK). Positions 21, 23, 25, 27, 32, 57, 59, 61, 63, 68, 94, 96, 98, and 105 each coordinate Ca(2+). N6,N6,N6-trimethyllysine is present on Lys-116. Residues Asp-129, Asp-131, Asp-133, Gln-135, and Glu-140 each coordinate Ca(2+).

It belongs to the calmodulin family.

Calmodulin mediates the control of a large number of enzymes, ion channels and other proteins by Ca(2+). Among the enzymes to be stimulated by the calmodulin-Ca(2+) complex are a number of protein kinases and phosphatases. This is Calmodulin (CAMF1) from Fagus sylvatica (Beechnut).